Here is an 84-residue protein sequence, read N- to C-terminus: ATP synthase subunit c (84 aa).

Helical transmembrane passes span 8–28 (VAGMCAIGAGLASIACIGGGI) and 56–76 (IIGSALSEATAIYGFLIAILL).

This sequence belongs to the ATPase C chain family. F-type ATPases have 2 components, F(1) - the catalytic core - and F(0) - the membrane proton channel. F(1) has five subunits: alpha(3), beta(3), gamma(1), delta(1), epsilon(1). F(0) has three main subunits: a(1), b(2) and c(10-14). The alpha and beta chains form an alternating ring which encloses part of the gamma chain. F(1) is attached to F(0) by a central stalk formed by the gamma and epsilon chains, while a peripheral stalk is formed by the delta and b chains.

It localises to the cell membrane. Its function is as follows. F(1)F(0) ATP synthase produces ATP from ADP in the presence of a proton or sodium gradient. F-type ATPases consist of two structural domains, F(1) containing the extramembraneous catalytic core and F(0) containing the membrane proton channel, linked together by a central stalk and a peripheral stalk. During catalysis, ATP synthesis in the catalytic domain of F(1) is coupled via a rotary mechanism of the central stalk subunits to proton translocation. Functionally, key component of the F(0) channel; it plays a direct role in translocation across the membrane. A homomeric c-ring of between 10-14 subunits forms the central stalk rotor element with the F(1) delta and epsilon subunits. The polypeptide is ATP synthase subunit c (Clostridium novyi (strain NT)).